We begin with the raw amino-acid sequence, 1452 residues long: Receptor-type tyrosine-protein phosphatase mu (1452 aa).

The signal sequence occupies residues 1–20; that stretch reads MRTLGTCLVTLAGLLLTAAG. Over 21–742 the chain is Extracellular; the sequence is ETFSGGCLFD…PEKQTDHTVK (722 aa). The region spanning 22 to 184 is the MAM domain; that stretch reads TFSGGCLFDE…VKVLGHPCTR (163 aa). Cysteine 27 and cysteine 36 are oxidised to a cystine. Asparagine 72, asparagine 92, asparagine 131, and asparagine 249 each carry an N-linked (GlcNAc...) asparagine glycan. 2 disulfide bridges follow: cysteine 96–cysteine 182 and cysteine 206–cysteine 260. An Ig-like C2-type domain is found at 186 to 277; it reads PHFLRIQNVE…VGISNYAELV (92 aa). Fibronectin type-III domains lie at 284–379, 382–480, 481–587, and 589–671; these read PIAP…CADP, GPRK…TDED, LPGA…SAPS, and PAYE…DSLQ. N-linked (GlcNAc...) asparagine glycans are attached at residues asparagine 406, asparagine 414, asparagine 454, asparagine 534, asparagine 544, asparagine 598, asparagine 651, and asparagine 681. A helical membrane pass occupies residues 743–764; it reads IAGVIAGILLFVIIFLGVVLVM. Over 765–1452 the chain is Cytoplasmic; it reads KKRKLAKKRK…EVALEYLNSG (688 aa). The residue at position 821 (serine 821) is a Phosphoserine. Tyrosine-protein phosphatase domains are found at residues 900–1154 and 1186–1448; these read FKEE…ILEA and IKEE…ALEY. Substrate contacts are provided by residues aspartate 1063, 1095–1101, and glutamine 1139; that span reads CSAGAGR. Cysteine 1095 (phosphocysteine intermediate) is an active-site residue. The Phosphocysteine intermediate role is filled by cysteine 1389.

Belongs to the protein-tyrosine phosphatase family. Receptor class 2B subfamily. As to quaternary structure, homodimer. In terms of tissue distribution, most abundant in lung, less in brain and heart.

It localises to the cell membrane. It catalyses the reaction O-phospho-L-tyrosyl-[protein] + H2O = L-tyrosyl-[protein] + phosphate. Its function is as follows. Receptor protein-tyrosine phosphatase that mediates homotypic cell-cell interactions and plays a role in adipogenic differentiation via modulation of p120 catenin/CTNND1 phosphorylation. Promotes CTNND1 dephosphorylation and prevents its cytoplasmic localization where it inhibits SLC2A4 membrane trafficking. In turn, SLC2A4 is directed to the plasma membrane and performs its glucose transporter function. This chain is Receptor-type tyrosine-protein phosphatase mu (Ptprm), found in Mus musculus (Mouse).